The primary structure comprises 428 residues: 3-phosphoshikimate 1-carboxyvinyltransferase (428 aa).

Residues Lys-22, Ser-23, and Arg-27 each coordinate 3-phosphoshikimate. Lys-22 lines the phosphoenolpyruvate pocket. The phosphoenolpyruvate site is built by Gly-98 and Arg-126. 3-phosphoshikimate-binding residues include Ser-172, Ser-173, Gln-174, Ser-200, Asp-316, Asn-339, and Lys-343. Gln-174 is a binding site for phosphoenolpyruvate. The Proton acceptor role is filled by Asp-316. Positions 347, 389, and 414 each coordinate phosphoenolpyruvate.

Belongs to the EPSP synthase family. As to quaternary structure, monomer.

The protein localises to the cytoplasm. The enzyme catalyses 3-phosphoshikimate + phosphoenolpyruvate = 5-O-(1-carboxyvinyl)-3-phosphoshikimate + phosphate. It participates in metabolic intermediate biosynthesis; chorismate biosynthesis; chorismate from D-erythrose 4-phosphate and phosphoenolpyruvate: step 6/7. In terms of biological role, catalyzes the transfer of the enolpyruvyl moiety of phosphoenolpyruvate (PEP) to the 5-hydroxyl of shikimate-3-phosphate (S3P) to produce enolpyruvyl shikimate-3-phosphate and inorganic phosphate. This Psychromonas ingrahamii (strain DSM 17664 / CCUG 51855 / 37) protein is 3-phosphoshikimate 1-carboxyvinyltransferase.